Reading from the N-terminus, the 121-residue chain is Small ribosomal subunit protein uS13 (121 aa).

Residues 91–121 (HRMSLPVRGQRTRTNARTRRGSRKTVAGRKK) are disordered. Over residues 100–121 (QRTRTNARTRRGSRKTVAGRKK) the composition is skewed to basic residues.

Belongs to the universal ribosomal protein uS13 family. Part of the 30S ribosomal subunit. Forms a loose heterodimer with protein S19. Forms two bridges to the 50S subunit in the 70S ribosome.

Located at the top of the head of the 30S subunit, it contacts several helices of the 16S rRNA. In the 70S ribosome it contacts the 23S rRNA (bridge B1a) and protein L5 of the 50S subunit (bridge B1b), connecting the 2 subunits; these bridges are implicated in subunit movement. Contacts the tRNAs in the A and P-sites. This Prochlorococcus marinus (strain AS9601) protein is Small ribosomal subunit protein uS13.